Reading from the N-terminus, the 311-residue chain is Methionyl-tRNA formyltransferase (311 aa).

109-112 provides a ligand contact to (6S)-5,6,7,8-tetrahydrofolate; sequence SLLP.

It belongs to the Fmt family.

It carries out the reaction L-methionyl-tRNA(fMet) + (6R)-10-formyltetrahydrofolate = N-formyl-L-methionyl-tRNA(fMet) + (6S)-5,6,7,8-tetrahydrofolate + H(+). Its function is as follows. Attaches a formyl group to the free amino group of methionyl-tRNA(fMet). The formyl group appears to play a dual role in the initiator identity of N-formylmethionyl-tRNA by promoting its recognition by IF2 and preventing the misappropriation of this tRNA by the elongation apparatus. In Acetivibrio thermocellus (strain ATCC 27405 / DSM 1237 / JCM 9322 / NBRC 103400 / NCIMB 10682 / NRRL B-4536 / VPI 7372) (Clostridium thermocellum), this protein is Methionyl-tRNA formyltransferase.